A 183-amino-acid chain; its full sequence is Ribulose bisphosphate carboxylase small subunit, chloroplastic (183 aa).

A chloroplast-targeting transit peptide spans 1–58; sequence MASSMLSTAAVACINRASPAQASMVAPFTGLKSTSAFPTTRKTTTDITSIASNGGRVQ.

The protein belongs to the RuBisCO small chain family. In terms of assembly, heterohexadecamer of 8 large and 8 small subunits.

Its subcellular location is the plastid. It localises to the chloroplast. Functionally, ruBisCO catalyzes two reactions: the carboxylation of D-ribulose 1,5-bisphosphate, the primary event in carbon dioxide fixation, as well as the oxidative fragmentation of the pentose substrate. Both reactions occur simultaneously and in competition at the same active site. Although the small subunit is not catalytic it is essential for maximal activity. The polypeptide is Ribulose bisphosphate carboxylase small subunit, chloroplastic (Hevea brasiliensis (Para rubber tree)).